Consider the following 199-residue polypeptide: Potassium-transporting ATPase KdpC subunit (199 aa).

A helical membrane pass occupies residues 7–27; sequence PALVMTAALCLITGIIYPGLI.

The protein belongs to the KdpC family. The system is composed of three essential subunits: KdpA, KdpB and KdpC.

It is found in the cell inner membrane. In terms of biological role, part of the high-affinity ATP-driven potassium transport (or Kdp) system, which catalyzes the hydrolysis of ATP coupled with the electrogenic transport of potassium into the cytoplasm. This subunit acts as a catalytic chaperone that increases the ATP-binding affinity of the ATP-hydrolyzing subunit KdpB by the formation of a transient KdpB/KdpC/ATP ternary complex. The sequence is that of Potassium-transporting ATPase KdpC subunit from Gemmatimonas aurantiaca (strain DSM 14586 / JCM 11422 / NBRC 100505 / T-27).